The sequence spans 289 residues: Phosphate import ATP-binding protein PstB (289 aa).

The tract at residues 1 to 37 (MRSIDRPGGQAARPTIGSVAGASNTRTRDARSLPDTP) is disordered. The 244-residue stretch at 41 to 284 (AAAENFSFYY…PVRRETEDYI (244 aa)) folds into the ABC transporter domain. 73 to 80 (GPSGCGKS) contributes to the ATP binding site.

The protein belongs to the ABC transporter superfamily. Phosphate importer (TC 3.A.1.7) family. As to quaternary structure, the complex is composed of two ATP-binding proteins (PstB), two transmembrane proteins (PstC and PstA) and a solute-binding protein (PstS).

The protein localises to the cell inner membrane. The catalysed reaction is phosphate(out) + ATP + H2O = ADP + 2 phosphate(in) + H(+). Its function is as follows. Part of the ABC transporter complex PstSACB involved in phosphate import. Responsible for energy coupling to the transport system. The protein is Phosphate import ATP-binding protein PstB of Aromatoleum aromaticum (strain DSM 19018 / LMG 30748 / EbN1) (Azoarcus sp. (strain EbN1)).